The following is a 164-amino-acid chain: Thioredoxin domain-containing protein R443 (164 aa).

Residues 8–28 form a helical membrane-spanning segment; that stretch reads HIVLIVLAIILILWIISLLLC. The Thioredoxin domain occupies 36–163; sequence YQVPIIQPMQ…LTQFIRSNMN (128 aa). Cysteine 84 and cysteine 87 are oxidised to a cystine.

It belongs to the thioredoxin family.

The protein resides in the host membrane. The protein localises to the virion. The chain is Thioredoxin domain-containing protein R443 from Acanthamoeba polyphaga mimivirus (APMV).